The following is a 145-amino-acid chain: 3-hydroxyacyl-[acyl-carrier-protein] dehydratase FabZ (145 aa).

Histidine 48 is a catalytic residue.

The protein belongs to the thioester dehydratase family. FabZ subfamily.

The protein resides in the cytoplasm. The enzyme catalyses a (3R)-hydroxyacyl-[ACP] = a (2E)-enoyl-[ACP] + H2O. In terms of biological role, involved in unsaturated fatty acids biosynthesis. Catalyzes the dehydration of short chain beta-hydroxyacyl-ACPs and long chain saturated and unsaturated beta-hydroxyacyl-ACPs. In Marinomonas sp. (strain MWYL1), this protein is 3-hydroxyacyl-[acyl-carrier-protein] dehydratase FabZ.